We begin with the raw amino-acid sequence, 100 residues long: Urease subunit gamma (100 aa).

The protein belongs to the urease gamma subunit family. Heterotrimer of UreA (gamma), UreB (beta) and UreC (alpha) subunits. Three heterotrimers associate to form the active enzyme.

The protein resides in the cytoplasm. The enzyme catalyses urea + 2 H2O + H(+) = hydrogencarbonate + 2 NH4(+). The protein operates within nitrogen metabolism; urea degradation; CO(2) and NH(3) from urea (urease route): step 1/1. The protein is Urease subunit gamma of Actinobacillus pleuropneumoniae serotype 5b (strain L20).